The sequence spans 653 residues: Chaperone protein dnaK3 (653 aa).

The residue at position 197 (T197) is a Phosphothreonine; by autocatalysis.

The protein belongs to the heat shock protein 70 family.

In terms of biological role, acts as a chaperone. The sequence is that of Chaperone protein dnaK3 (dnaK3) from Nostoc sp. (strain PCC 7120 / SAG 25.82 / UTEX 2576).